A 385-amino-acid polypeptide reads, in one-letter code: Cell division protein FtsZ (385 aa).

Residues 20–24 (GGGGN), 107–109 (GTG), Glu138, Arg142, and Asn186 contribute to the GTP site.

This sequence belongs to the FtsZ family. As to quaternary structure, homodimer. Polymerizes to form a dynamic ring structure in a strictly GTP-dependent manner. Interacts directly with several other division proteins.

It localises to the cytoplasm. Functionally, essential cell division protein that forms a contractile ring structure (Z ring) at the future cell division site. The regulation of the ring assembly controls the timing and the location of cell division. One of the functions of the FtsZ ring is to recruit other cell division proteins to the septum to produce a new cell wall between the dividing cells. Binds GTP and shows GTPase activity. The chain is Cell division protein FtsZ from Buchnera aphidicola subsp. Baizongia pistaciae (strain Bp).